Reading from the N-terminus, the 269-residue chain is MATH domain and coiled-coil domain-containing protein At2g01790 (269 aa).

Residues 6–134 enclose the MATH domain; that stretch reads AVKKLWVINN…NGEVDIVAEV (129 aa). A coiled-coil region spans residues 228–269; the sequence is KLDWLEKKLKETGKSRLQEIEEDLKDLKVKCADMDALLEFLR.

In Arabidopsis thaliana (Mouse-ear cress), this protein is MATH domain and coiled-coil domain-containing protein At2g01790.